Consider the following 784-residue polypeptide: Ribosome biogenesis protein BOP1 homolog (784 aa).

Residues 1–11 are compositionally biased toward basic residues; the sequence is MTKKLALKRRG. Residues 1 to 159 are disordered; that stretch reads MTKKLALKRR…DSDTSDEEDI (159 aa). Acidic residues-rich tracts occupy residues 27–36, 45–54, 62–73, and 84–111; these read SENEEEEEDL, EDSTDDEGID, SEELQFESDEEG, and AEED…EDEE. 2 stretches are compositionally biased toward basic and acidic residues: residues 112 to 123 and 138 to 148; these read KVSKSKQSDDKP and LPKRDSSKPEY. Over residues 149 to 158 the composition is skewed to acidic residues; it reads QDSDTSDEED. WD repeat units lie at residues 445 to 486, 488 to 526, 570 to 612, 615 to 653, 656 to 695, 699 to 738, and 754 to 784; these read GHTD…RTIE, DEVV…KVLV, THFK…SQIP, KSKG…LVKK, TNSK…KPYQ, LHRN…DLLQ, and RDEF…RLYT.

Belongs to the WD repeat BOP1/ERB1 family.

The protein resides in the nucleus. The protein localises to the nucleolus. It localises to the nucleoplasm. Required for maturation of ribosomal RNAs and formation of the large ribosomal subunit. The polypeptide is Ribosome biogenesis protein BOP1 homolog (Drosophila sechellia (Fruit fly)).